The following is a 179-amino-acid chain: Large ribosomal subunit protein uL5 (179 aa).

This sequence belongs to the universal ribosomal protein uL5 family. In terms of assembly, part of the 50S ribosomal subunit; part of the 5S rRNA/L5/L18/L25 subcomplex. Contacts the 5S rRNA and the P site tRNA. Forms a bridge to the 30S subunit in the 70S ribosome.

In terms of biological role, this is one of the proteins that bind and probably mediate the attachment of the 5S RNA into the large ribosomal subunit, where it forms part of the central protuberance. In the 70S ribosome it contacts protein S13 of the 30S subunit (bridge B1b), connecting the 2 subunits; this bridge is implicated in subunit movement. Contacts the P site tRNA; the 5S rRNA and some of its associated proteins might help stabilize positioning of ribosome-bound tRNAs. This chain is Large ribosomal subunit protein uL5, found in Burkholderia ambifaria (strain MC40-6).